Reading from the N-terminus, the 152-residue chain is Probable methionine-R-sulfoxide reductase B (152 aa).

The MsrB domain occupies 27-151 (QTEWKSVLPN…NSVCMAFEKK (125 aa)). The Zn(2+) site is built by Cys66, Cys69, Cys116, and Cys119. Cys140 (nucleophile) is an active-site residue.

This sequence belongs to the MsrB Met sulfoxide reductase family. The cofactor is Zn(2+).

The catalysed reaction is L-methionyl-[protein] + [thioredoxin]-disulfide + H2O = L-methionyl-(R)-S-oxide-[protein] + [thioredoxin]-dithiol. In terms of biological role, methionine-sulfoxide reductase that specifically reduces methionine (R)-sulfoxide back to methionine. While in many cases, methionine oxidation is the result of random oxidation following oxidative stress, methionine oxidation is also a post-translational modification that takes place on specific residue. This Caenorhabditis elegans protein is Probable methionine-R-sulfoxide reductase B.